Consider the following 197-residue polypeptide: Imidazoleglycerol-phosphate dehydratase (197 aa).

This sequence belongs to the imidazoleglycerol-phosphate dehydratase family.

The protein localises to the cytoplasm. It catalyses the reaction D-erythro-1-(imidazol-4-yl)glycerol 3-phosphate = 3-(imidazol-4-yl)-2-oxopropyl phosphate + H2O. The protein operates within amino-acid biosynthesis; L-histidine biosynthesis; L-histidine from 5-phospho-alpha-D-ribose 1-diphosphate: step 6/9. In Alkalilimnicola ehrlichii (strain ATCC BAA-1101 / DSM 17681 / MLHE-1), this protein is Imidazoleglycerol-phosphate dehydratase.